Reading from the N-terminus, the 331-residue chain is tRNA N6-adenosine threonylcarbamoyltransferase (331 aa).

A divalent metal cation-binding residues include H108, H112, and Y129. Substrate contacts are provided by residues 129–133 (YASGG), D161, G176, E180, and N261. D289 contributes to the a divalent metal cation binding site.

The protein belongs to the KAE1 / TsaD family. As to quaternary structure, component of the EKC/KEOPS complex composed of at least BUD32, CGI121, GON7, KAE1 and PCC1; the whole complex dimerizes. A divalent metal cation serves as cofactor.

Its subcellular location is the cytoplasm. The protein localises to the nucleus. It carries out the reaction L-threonylcarbamoyladenylate + adenosine(37) in tRNA = N(6)-L-threonylcarbamoyladenosine(37) in tRNA + AMP + H(+). Component of the EKC/KEOPS complex that is required for the formation of a threonylcarbamoyl group on adenosine at position 37 (t(6)A37) in tRNAs that read codons beginning with adenine. The complex is probably involved in the transfer of the threonylcarbamoyl moiety of threonylcarbamoyl-AMP (TC-AMP) to the N6 group of A37. KAE1 likely plays a direct catalytic role in this reaction, but requires other protein(s) of the complex to fulfill this activity. The EKC/KEOPS complex also promotes both telomere uncapping and telomere elongation. The complex is required for efficient recruitment of transcriptional coactivators. This is tRNA N6-adenosine threonylcarbamoyltransferase from Encephalitozoon cuniculi (strain GB-M1) (Microsporidian parasite).